We begin with the raw amino-acid sequence, 307 residues long: Plasmodesmata-located protein 2 (307 aa).

The N-terminal stretch at 1 to 23 (MGLSISFLSIIMMMCLLFPDLNV) is a signal peptide. The Extracellular portion of the chain corresponds to 24–275 (VVKSATTEYT…STSTGATGKT (252 aa)). 2 Gnk2-homologous domains span residues 33 to 136 (TTLI…VSGF) and 141 to 240 (GMEM…YYPN). Cystine bridges form between Cys40–Cys114, Cys90–Cys99, Cys102–Cys127, Cys149–Cys218, Cys194–Cys203, and Cys206–Cys231. The span at 246–268 (SSSSSSSSSSSSSGSSNSDPSTS) shows a compositional bias: low complexity. Positions 246–270 (SSSSSSSSSSSSSGSSNSDPSTSTG) are disordered. The helical transmembrane segment at 276–296 (VAIIVGGAAGVGFLVICLLFA) threads the bilayer. Positions 276–296 (VAIIVGGAAGVGFLVICLLFA) are necessary and sufficient for plasmodesmal targeting. Topologically, residues 297 to 307 (KNLMRKKHDDY) are cytoplasmic.

It belongs to the cysteine-rich repeat secretory protein family. Plasmodesmata-located proteins (PDLD) subfamily. In terms of assembly, (Microbial infection) Interacts with Grapevine fanleaf virus (GFLV) 2B-MP. As to expression, highly expressed in inflorescence shoot apex. Uniformly expressed within the inflorescence meristem with the exception of a boundary zone between floral primordia and the meristem where the expression is weaker (at protein level).

Its subcellular location is the cell membrane. It is found in the cell junction. It localises to the plasmodesma. In terms of biological role, modulates cell-to-cell trafficking. This chain is Plasmodesmata-located protein 2, found in Arabidopsis thaliana (Mouse-ear cress).